Here is a 92-residue protein sequence, read N- to C-terminus: C-C motif chemokine 3 (92 aa).

The first 23 residues, 1-23, serve as a signal peptide directing secretion; that stretch reads MQVSTAALAVLLCTMALCNQFSA. Intrachain disulfides connect Cys33-Cys57 and Cys34-Cys73.

Belongs to the intercrine beta (chemokine CC) family. Self-associates. Also heterodimer of MIP-1-alpha(4-69) and MIP-1-beta(3-69). Interacts with CCR1.

The protein localises to the secreted. Monokine with inflammatory and chemokinetic properties. Binds to CCR1, CCR4 and CCR5. One of the major HIV-suppressive factors produced by CD8+ T-cells. Recombinant MIP-1-alpha induces a dose-dependent inhibition of different strains of HIV-1, HIV-2, and simian immunodeficiency virus (SIV). The sequence is that of C-C motif chemokine 3 (CCL3) from Pan troglodytes (Chimpanzee).